The sequence spans 942 residues: UvrABC system protein A (942 aa).

Glycine 32–serine 39 serves as a coordination point for ATP. The C4-type zinc finger occupies cysteine 251–cysteine 278. 2 ABC transporter domains span residues tryptophan 308–isoleucine 589 and glycine 609–lysine 937. ATP is bound at residue glycine 641 to serine 648. Residues cysteine 740–cysteine 766 form a C4-type zinc finger.

It belongs to the ABC transporter superfamily. UvrA family. Forms a heterotetramer with UvrB during the search for lesions.

The protein resides in the cytoplasm. In terms of biological role, the UvrABC repair system catalyzes the recognition and processing of DNA lesions. UvrA is an ATPase and a DNA-binding protein. A damage recognition complex composed of 2 UvrA and 2 UvrB subunits scans DNA for abnormalities. When the presence of a lesion has been verified by UvrB, the UvrA molecules dissociate. The protein is UvrABC system protein A of Streptococcus pyogenes serotype M1.